A 293-amino-acid chain; its full sequence is ATP phosphoribosyltransferase (293 aa).

It belongs to the ATP phosphoribosyltransferase family. Long subfamily. Requires Mg(2+) as cofactor.

The protein localises to the cytoplasm. It carries out the reaction 1-(5-phospho-beta-D-ribosyl)-ATP + diphosphate = 5-phospho-alpha-D-ribose 1-diphosphate + ATP. The protein operates within amino-acid biosynthesis; L-histidine biosynthesis; L-histidine from 5-phospho-alpha-D-ribose 1-diphosphate: step 1/9. With respect to regulation, feedback inhibited by histidine. In terms of biological role, catalyzes the condensation of ATP and 5-phosphoribose 1-diphosphate to form N'-(5'-phosphoribosyl)-ATP (PR-ATP). Has a crucial role in the pathway because the rate of histidine biosynthesis seems to be controlled primarily by regulation of HisG enzymatic activity. The chain is ATP phosphoribosyltransferase from Nitratidesulfovibrio vulgaris (strain ATCC 29579 / DSM 644 / CCUG 34227 / NCIMB 8303 / VKM B-1760 / Hildenborough) (Desulfovibrio vulgaris).